A 248-amino-acid chain; its full sequence is Probable transcriptional regulatory protein PHZ_c3068 (248 aa).

It belongs to the TACO1 family.

Its subcellular location is the cytoplasm. In Phenylobacterium zucineum (strain HLK1), this protein is Probable transcriptional regulatory protein PHZ_c3068.